A 790-amino-acid chain; its full sequence is Probable copper-transporting ATPase SynA (790 aa).

At 1–105 the chain is on the cytoplasmic side; the sequence is MPAAIVHSAD…IPPLQQQRLQ (105 aa). Positions 14–81 constitute an HMA domain; the sequence is TSILVEVEGM…EITGLGFRAQ (68 aa). The Cu(+) site is built by C25 and C28. Residues 106–127 form a helical membrane-spanning segment; that stretch reads LAIAAFLLIVSSWGHLGHWLDH. The Extracellular segment spans residues 128–136; the sequence is PLPGTDQLW. Residues 137–156 traverse the membrane as a helical segment; sequence FHALLATWALLGPGRSILQA. Residues 157 to 163 are Cytoplasmic-facing; that stretch reads GWQGLRC. Residues 164–184 traverse the membrane as a helical segment; it reads GAPNMNSLVLLGTGSAYLASL. Over 185 to 198 the chain is Extracellular; that stretch reads VALLWPQLGWVCFF. A helical transmembrane segment spans residues 199–219; the sequence is DEPVMLLGFILLGRTLEEQAR. Residues 220-358 are Cytoplasmic-facing; sequence FRSQAALQNL…KAPVQRFADA (139 aa). The helical transmembrane segment at 359–381 threads the bilayer; it reads IAGRFVYGVCAIAALTFGFWATL. Residues 382-420 are Extracellular-facing; the sequence is GSRWWPQVLQQPLPGLLIHAPHHGMEMAHPHSHSPLLLA. A helical membrane pass occupies residues 421–438; the sequence is LTLAISVLVVACPCALGL. Topologically, residues 439 to 723 are cytoplasmic; the sequence is ATPTAILVAT…NLSQMGLRTI (285 aa). D476 (4-aspartylphosphate intermediate) is an active-site residue. Residues D669 and D673 each contribute to the Mg(2+) site. A helical transmembrane segment spans residues 724–743; it reads RQNLTWALGYNVVMLPLAAG. At 744-755 the chain is on the extracellular side; the sequence is AFLPAYGLALTP. The helical transmembrane segment at 756–774 threads the bilayer; it reads AIAGACMAVSSLAVVSNSL. The Cytoplasmic segment spans residues 775-790; it reads LLRYWFRRSLNHSVSV.

Belongs to the cation transport ATPase (P-type) (TC 3.A.3) family. Type IB subfamily.

It is found in the cell membrane. It carries out the reaction Cu(+)(in) + ATP + H2O = Cu(+)(out) + ADP + phosphate + H(+). Functionally, involved in copper transport. In Synechococcus elongatus (strain ATCC 33912 / PCC 7942 / FACHB-805) (Anacystis nidulans R2), this protein is Probable copper-transporting ATPase SynA (synA).